Reading from the N-terminus, the 400-residue chain is Ornithine aminotransferase (400 aa).

Lys-254 carries the post-translational modification N6-(pyridoxal phosphate)lysine.

This sequence belongs to the class-III pyridoxal-phosphate-dependent aminotransferase family. OAT subfamily. Pyridoxal 5'-phosphate is required as a cofactor.

It is found in the cytoplasm. It carries out the reaction a 2-oxocarboxylate + L-ornithine = L-glutamate 5-semialdehyde + an L-alpha-amino acid. It participates in amino-acid biosynthesis; L-proline biosynthesis; L-glutamate 5-semialdehyde from L-ornithine: step 1/1. Its function is as follows. Catalyzes the interconversion of ornithine to glutamate semialdehyde. This chain is Ornithine aminotransferase, found in Exiguobacterium sp. (strain ATCC BAA-1283 / AT1b).